The primary structure comprises 331 residues: Ketol-acid reductoisomerase (NADP(+)) (331 aa).

The 181-residue stretch at 2 to 182 (ARMYYDTDAN…GGTRAGILET (181 aa)) folds into the KARI N-terminal Rossmann domain. Residues 25-28 (YGSQ), Ser-51, Ser-53, and 83-86 (DEVQ) contribute to the NADP(+) site. Residue His-108 is part of the active site. Gly-134 serves as a coordination point for NADP(+). Residues 183 to 328 (TFREETETDL…KDLRAMFSWL (146 aa)) form the KARI C-terminal knotted domain. Residues Asp-191, Glu-195, Glu-227, and Glu-231 each coordinate Mg(2+). A substrate-binding site is contributed by Ser-252.

The protein belongs to the ketol-acid reductoisomerase family. The cofactor is Mg(2+).

The enzyme catalyses (2R)-2,3-dihydroxy-3-methylbutanoate + NADP(+) = (2S)-2-acetolactate + NADPH + H(+). It catalyses the reaction (2R,3R)-2,3-dihydroxy-3-methylpentanoate + NADP(+) = (S)-2-ethyl-2-hydroxy-3-oxobutanoate + NADPH + H(+). It functions in the pathway amino-acid biosynthesis; L-isoleucine biosynthesis; L-isoleucine from 2-oxobutanoate: step 2/4. The protein operates within amino-acid biosynthesis; L-valine biosynthesis; L-valine from pyruvate: step 2/4. Its function is as follows. Involved in the biosynthesis of branched-chain amino acids (BCAA). Catalyzes an alkyl-migration followed by a ketol-acid reduction of (S)-2-acetolactate (S2AL) to yield (R)-2,3-dihydroxy-isovalerate. In the isomerase reaction, S2AL is rearranged via a Mg-dependent methyl migration to produce 3-hydroxy-3-methyl-2-ketobutyrate (HMKB). In the reductase reaction, this 2-ketoacid undergoes a metal-dependent reduction by NADPH to yield (R)-2,3-dihydroxy-isovalerate. The protein is Ketol-acid reductoisomerase (NADP(+)) of Rippkaea orientalis (strain PCC 8801 / RF-1) (Cyanothece sp. (strain PCC 8801)).